The sequence spans 1886 residues: Highly reducing polyketide synthase (1886 aa).

The Ketosynthase family 3 (KS3) domain maps to 11 to 434; the sequence is TQDVAIVGLS…GANAHAVLDD (424 aa). Residues C182, H317, and H357 each act as for beta-ketoacyl synthase activity in the active site. Residues 483-568 are malonyl-CoA:ACP transacylase (MAT) domain; that stretch reads FLFSGQDQQS…VNNDLANTKK (86 aa). An N-terminal hotdog fold region spans residues 616-750; the sequence is RSLIGAPQPS…GLLSIEYESS (135 aa). Residues 616 to 926 form the PKS/mFAS DH domain; sequence RSLIGAPQPS…CTAISEATNP (311 aa). The tract at residues 618–924 is dehydratase (DH) domain; that stretch reads LIGAPQPSYG…LHCTAISEAT (307 aa). H648 acts as the Proton acceptor; for dehydratase activity in catalysis. Positions 778 to 926 are C-terminal hotdog fold; it reads HTTQSPKALY…CTAISEATNP (149 aa). The active-site Proton donor; for dehydratase activity is D838. The tract at residues 1169–1480 is enoylreductase (ER) domain; it reads GMLDEIYFEA…AGKHMGKVAL (312 aa). Residues 1503 to 1681 are catalytic ketoreductase (KRc) domain; the sequence is ATYVLVGGFG…VSLDLGLMRD (179 aa). Positions 1802–1879 constitute a Carrier domain; sequence DVTDLVLEIL…DLVDKIVAKS (78 aa). S1839 carries the post-translational modification O-(pantetheine 4'-phosphoryl)serine.

The protein operates within mycotoxin biosynthesis. In terms of biological role, highly reducing polyketide synthase; part of the gene cluster that mediates the biosynthesis of the selective antifungal agent ascochitine, an o-quinone methide that plays a possible protective role against other microbial competitors in nature and is considered to be important for pathogenicity of legume-associated Didymella species. The pathway probably begins with the synthesis of a keto-aldehyde intermediate by the ascochitine non-reducing polyketide synthase pksAC from successive condensations of 4 malonyl-CoA units, presumably with a simple acetyl-CoA starter unit. Release of the keto-aldehyde intermediate is consistent with the presence of the C-terminal reductive release domain. The HR-PKS (orf7) probably makes a diketide starter unit which is passed to the non-reducing polyketide synthase pksAC for further extension, producing ascochital and ascochitine. The aldehyde dehydrogenase (orf1), the 2-oxoglutarate-dependent dioxygenase (orf3) and the dehydrogenase (orf9) are probably involved in subsequent oxidations of methyl groups to the carboxylic acid of the heterocyclic ring. The ascochitine gene cluster also includes a gene encoding a short peptide with a cupin domain (orf2) that is often found in secondary metabolite gene clusters and which function has still to be determined. In Didymella fabae (Leaf and pod spot disease fungus), this protein is Highly reducing polyketide synthase.